The primary structure comprises 1194 residues: ATP-dependent RNA helicase DHX30 (1194 aa).

Over residues 1 to 10 (MFTLDSFRKD) the composition is skewed to basic and acidic residues. Residues 1 to 27 (MFTLDSFRKDRTQHRQRQCKLPPPRLP) form a disordered region. Serine 6 carries the post-translational modification Phosphoserine. Positions 53–121 (PKNLLNSVIG…QAAAAACQLF (69 aa)) constitute a DRBM domain. Residues 153–200 (WWRPEPTMPPTSWRQLNPENIRPAGTGGLSRSLGREEEEDEEEELEEG) are disordered. The span at 188 to 200 (EEEEDEEEELEEG) shows a compositional bias: acidic residues. Residues serine 226 and serine 380 each carry the phosphoserine modification. Residues 444 to 612 (LSAIEQHPVV…FGGCPVIKVP (169 aa)) enclose the Helicase ATP-binding domain. Position 457-464 (457-464 (GDTGCGKT)) interacts with ATP. The DEAH box signature appears at 559–562 (DEVH). The region spanning 654 to 827 (LVTDLVLHID…NLVLQAKIHM (174 aa)) is the Helicase C-terminal domain.

It belongs to the DEAD box helicase family. DEAH subfamily. In terms of assembly, identified in a complex with TFAM and SSBP1. Interacts (via N-terminus) with ZC3HAV1 (via N-terminal domain) in an RNA-independent manner. Found in a complex with GRSF1, DDX28, FASTKD2 and FASTKD5.

It localises to the cytoplasm. The protein resides in the mitochondrion. It is found in the mitochondrion matrix. The protein localises to the mitochondrion nucleoid. The enzyme catalyses ATP + H2O = ADP + phosphate + H(+). In terms of biological role, RNA-dependent helicase. Plays an important role in the assembly of the mitochondrial large ribosomal subunit. Associates with mitochondrial DNA. Required for optimal function of the zinc-finger antiviral protein ZC3HAV1. Involved in nervous system development and differentiation through its involvement in the up-regulation of a number of genes which are required for neurogenesis, including GSC, NCAM1, neurogenin, and NEUROD. This Rattus norvegicus (Rat) protein is ATP-dependent RNA helicase DHX30 (Dhx30).